Here is a 616-residue protein sequence, read N- to C-terminus: Chaperone protein HscA (616 aa).

The protein belongs to the heat shock protein 70 family.

Its function is as follows. Chaperone involved in the maturation of iron-sulfur cluster-containing proteins. Has a low intrinsic ATPase activity which is markedly stimulated by HscB. Involved in the maturation of IscU. In Shigella boydii serotype 18 (strain CDC 3083-94 / BS512), this protein is Chaperone protein HscA.